Consider the following 182-residue polypeptide: Ribulose bisphosphate carboxylase small subunit, chloroplastic 1 (182 aa).

The N-terminal 42 residues, 1 to 42 (MASIMMNKSVVLSKECAKPLATPKVTLNKRGFATTIATKNRE), are a transit peptide targeting the chloroplast.

The protein belongs to the RuBisCO small chain family. Heterohexadecamer of 8 large and 8 small subunits.

Its subcellular location is the plastid. The protein localises to the chloroplast. RuBisCO catalyzes two reactions: the carboxylation of D-ribulose 1,5-bisphosphate, the primary event in carbon dioxide fixation, as well as the oxidative fragmentation of the pentose substrate. Both reactions occur simultaneously and in competition at the same active site. Although the small subunit is not catalytic it is essential for maximal activity. This is Ribulose bisphosphate carboxylase small subunit, chloroplastic 1 from Acetabularia acetabulum (Mermaid's wine glass).